Here is an 86-residue protein sequence, read N- to C-terminus: Large ribosomal subunit protein eL20 (86 aa).

The protein belongs to the eukaryotic ribosomal protein eL20 family. Part of the 50S ribosomal subunit. Binds 23S rRNA.

The sequence is that of Large ribosomal subunit protein eL20 from Sulfolobus acidocaldarius (strain ATCC 33909 / DSM 639 / JCM 8929 / NBRC 15157 / NCIMB 11770).